We begin with the raw amino-acid sequence, 1000 residues long: DENN domain-containing protein 2A (1000 aa).

Disordered stretches follow at residues 1–155, 174–328, 427–464, and 491–525; these read MLEA…LRFQ, DGSA…RKSY, KLLDTRKLSRDGAGSPLRTSPPSTPSSPDDTFFNLGDL, and KRVKRLSQSTESNSGKVTDENSESDSDTEEKLKAH. Over residues 34–43 the composition is skewed to polar residues; the sequence is QLNSVPNSGP. Composition is skewed to basic and acidic residues over residues 56–70, 79–117, 140–155, and 221–237; these read IKDKISKWEGKKEPP, DGQEDHLPSCKVERRGSELTRTKNGMRLETERLQNDSRA, SQHRGRELKPSDLRFQ, and HLEVREPGPEISEDWKG. Pro residues-rich tracts occupy residues 249–258 and 288–307; these read PPKPFINPVP and PPLPSLPPPPPPLPSSPPPT. The segment covering 427–436 has biased composition (basic and acidic residues); it reads KLLDTRKLSR. A compositionally biased stretch (polar residues) spans 496–506; the sequence is LSQSTESNSGK. Serine 544 bears the Phosphoserine mark. Residues 559–708 enclose the uDENN domain; it reads EYFVVVSLHK…PFPALGKTII (150 aa). The 134-residue stretch at 730-863 folds into the cDENN domain; it reads RLEHVDFESL…LQVALEHILE (134 aa). The dDENN domain maps to 865-960; sequence RNDLACDQDG…QERELRRQDA (96 aa).

It is found in the cytoplasm. It localises to the cytoskeleton. In terms of biological role, guanine nucleotide exchange factor (GEF) which may activate RAB9A and RAB9B. Promotes the exchange of GDP to GTP, converting inactive GDP-bound Rab proteins into their active GTP-bound form. May play a role in late endosomes back to trans-Golgi network/TGN transport. In Mus musculus (Mouse), this protein is DENN domain-containing protein 2A (Dennd2a).